Consider the following 144-residue polypeptide: Large ribosomal subunit protein uL11 (144 aa).

This sequence belongs to the universal ribosomal protein uL11 family. In terms of assembly, part of the ribosomal stalk of the 50S ribosomal subunit. Interacts with L10 and the large rRNA to form the base of the stalk. L10 forms an elongated spine to which L12 dimers bind in a sequential fashion forming a multimeric L10(L12)X complex. In terms of processing, one or more lysine residues are methylated.

Its function is as follows. Forms part of the ribosomal stalk which helps the ribosome interact with GTP-bound translation factors. This chain is Large ribosomal subunit protein uL11, found in Deinococcus geothermalis (strain DSM 11300 / CIP 105573 / AG-3a).